We begin with the raw amino-acid sequence, 888 residues long: Villin-like protein quail (888 aa).

One copy of the Gelsolin-like repeat lies at 307 to 366 (GVYLLDNYGQSIWLWVGGQAPQADALSAMGNGRAFVKKKKYPDNTLVVRVLEGHEPVEFK). The 66-residue stretch at 823–888 (FDGHKKYPLT…MELKKQFKLF (66 aa)) folds into the HP domain.

It belongs to the villin/gelsolin family. As to expression, germline specific in adult flies.

Required for the formation of cytoplasmic actin filament bundles in nurse cells, possibly by regulating both the polymerization and organization of actin filaments. Mutations in quail result in female sterility due to the disruption of cytoplasmic transport from the nurse cells into the oocyte late in oogenesis. This Drosophila melanogaster (Fruit fly) protein is Villin-like protein quail (qua).